The primary structure comprises 1049 residues: Dyslexia-associated protein KIAA0319-like protein (1049 aa).

At 1–29 the chain is on the cytoplasmic side; it reads MEKRLGVKPNPASWILSGYYWQTSAKWLR. A helical membrane pass occupies residues 30–50; sequence SLYLFYTCFCFSVLWLSTDAS. In terms of domain architecture, MANSC spans 49 to 127; sequence ASESRCQQGK…AFRTHSSNSM (79 aa). Residues 51–932 lie on the Extracellular side of the membrane; the sequence is ESRCQQGKTQ…DSNCEWSVLY (882 aa). Asn-247, Asn-395, Asn-472, Asn-487, and Asn-525 each carry an N-linked (GlcNAc...) asparagine glycan. PKD domains follow at residues 312 to 401, 409 to 498, 504 to 594, 600 to 688, and 694 to 785; these read SAGE…VKPE, IAIV…VNKA, VANA…VQPE, QADA…VKEE, and IAKI…VKPD. The chain crosses the membrane as a helical span at residues 933–953; sequence VIIATFVIVVALGILSWTVIC. The Cytoplasmic segment spans residues 954 to 1049; sequence CCKRQKGKPK…KARSPREEIL (96 aa). Thr-974 carries the post-translational modification Phosphothreonine. Phosphoserine occurs at positions 978, 1009, and 1031. A disordered region spans residues 1022 to 1049; the sequence is GKLLHGQNGSVPNGQTPLKARSPREEIL. The segment covering 1028–1037 has biased composition (polar residues); that stretch reads QNGSVPNGQT. The residue at position 1037 (Thr-1037) is a Phosphothreonine.

As to quaternary structure, interacts with RTN4R. (Microbial infection) Interacts with AAV-2 VP1. In terms of processing, N-glycosylated. Expressed in cortical neurons in the brain cortex (at protein level).

It is found in the cytoplasmic granule membrane. The protein localises to the golgi apparatus membrane. It localises to the golgi apparatus. Its subcellular location is the trans-Golgi network membrane. The protein resides in the cell membrane. Possible role in axon guidance through interaction with RTN4R. Its function is as follows. (Microbial infection) Acts as a receptor for adeno-associated virus and is involved in adeno-associated virus infection through endocytosis system. In Homo sapiens (Human), this protein is Dyslexia-associated protein KIAA0319-like protein.